The primary structure comprises 679 residues: Methionine--tRNA ligase (679 aa).

The 'HIGH' region motif lies at proline 15 to histidine 25. Residues cysteine 146, cysteine 149, cysteine 159, and cysteine 162 each contribute to the Zn(2+) site. The 'KMSKS' region signature appears at lysine 332–serine 336. Residue lysine 335 participates in ATP binding. Residues aspartate 578 to lysine 679 enclose the tRNA-binding domain.

It belongs to the class-I aminoacyl-tRNA synthetase family. MetG type 1 subfamily. In terms of assembly, homodimer. The cofactor is Zn(2+).

It localises to the cytoplasm. The catalysed reaction is tRNA(Met) + L-methionine + ATP = L-methionyl-tRNA(Met) + AMP + diphosphate. Functionally, is required not only for elongation of protein synthesis but also for the initiation of all mRNA translation through initiator tRNA(fMet) aminoacylation. The polypeptide is Methionine--tRNA ligase (Shewanella pealeana (strain ATCC 700345 / ANG-SQ1)).